Here is an 836-residue protein sequence, read N- to C-terminus: Granulocyte colony-stimulating factor receptor (836 aa).

The first 24 residues, 1–24, serve as a signal peptide directing secretion; that stretch reads MARLGNCSLTWAALIILLLPGSLE. The Ig-like C2-type domain occupies 25–117; the sequence is ECGHISVSAP…SLQILDQVEL (93 aa). The Extracellular portion of the chain corresponds to 25–627; it reads ECGHISVSAP…TLTPEGSELH (603 aa). Intrachain disulfides connect C26–C52 and C46–C101. N51, N93, N128, and N134 each carry an N-linked (GlcNAc...) asparagine glycan. Fibronectin type-III domains lie at 125–230, 233–332, 334–430, 431–528, and 530–623; these read IPHN…LEPP, RTMD…TTER, PTVR…SRGP, ALTR…MAPS, and APEL…TPEG. Intrachain disulfides connect C131/C142, C167/C218, C177/C186, C248/C295, and C266/C309. Residues 318–322 carry the WSXWS motif motif; the sequence is WSDWS. Residues N389, N474, N579, and N610 are each glycosylated (N-linked (GlcNAc...) asparagine). Residues 628-650 form a helical membrane-spanning segment; that stretch reads IILGLFGLLLLLTCLCGTAWLCC. Over 651–836 the chain is Cytoplasmic; the sequence is SPNRKNPLWP…VHGMEALGSF (186 aa). Positions 658 to 666 match the Box 1 motif motif; it reads LWPSVPDPA.

Belongs to the type I cytokine receptor family. Type 2 subfamily. As to quaternary structure, homodimer. The dimeric receptor binds two CSF3 molecules. Interacts with CEACAM1; down-regulates the CSF3R-STAT3 pathway through recruitment of PTPN6 that dephosphorylates CSF3R. N-glycosylated. As to expression, one or several isoforms have been found in myelogenous leukemia cell line KG-1, leukemia U-937 cell line, in bone marrow cells, placenta, and peripheral blood granulocytes. Isoform GCSFR-2 is found only in leukemia U-937 cells. Isoform GCSFR-3 is highly expressed in placenta.

Its subcellular location is the secreted. The protein localises to the cell membrane. Functionally, receptor for granulocyte colony-stimulating factor (CSF3), essential for granulocytic maturation. Plays a crucial role in the proliferation, differentiation and survival of cells along the neutrophilic lineage. In addition it may function in some adhesion or recognition events at the cell surface. This chain is Granulocyte colony-stimulating factor receptor (CSF3R), found in Homo sapiens (Human).